The primary structure comprises 552 residues: 2,3-bisphosphoglycerate-independent phosphoglycerate mutase (552 aa).

Polar residues predominate over residues 1–25; the sequence is MTNTQQQSESIDDNQAQLSKQQNSD. The interval 1–30 is disordered; it reads MTNTQQQSESIDDNQAQLSKQQNSDNNKKV. The Mn(2+) site is built by aspartate 38 and serine 88. The active-site Phosphoserine intermediate is the serine 88. Substrate contacts are provided by residues histidine 149, 179–180, arginine 217, arginine 223, 293–296, and lysine 373; these read RD and RADR. Residues aspartate 440, histidine 444, aspartate 481, histidine 482, and histidine 500 each contribute to the Mn(2+) site.

It belongs to the BPG-independent phosphoglycerate mutase family. As to quaternary structure, monomer. The cofactor is Mn(2+).

The enzyme catalyses (2R)-2-phosphoglycerate = (2R)-3-phosphoglycerate. Its pathway is carbohydrate degradation; glycolysis; pyruvate from D-glyceraldehyde 3-phosphate: step 3/5. In terms of biological role, catalyzes the interconversion of 2-phosphoglycerate and 3-phosphoglycerate. The polypeptide is 2,3-bisphosphoglycerate-independent phosphoglycerate mutase (Psychrobacter arcticus (strain DSM 17307 / VKM B-2377 / 273-4)).